We begin with the raw amino-acid sequence, 1984 residues long: Sodium channel protein type 9 subunit alpha (1984 aa).

Over 1–125 (MAMLPPPGPQ…RRISIKILVH (125 aa)) the chain is Cytoplasmic. The segment covering 26 to 39 (RISEEKAKGHKDEK) has biased composition (basic and acidic residues). Residues 26 to 55 (RISEEKAKGHKDEKKDDEEEGPKPSSDLEA) are disordered. Residues 112–410 (FSPLRRISIK…VAMAYEEQNQ (299 aa)) form an I repeat. Residues 126–145 (SLFSMLIMCTILTNCIFMTM) traverse the membrane as a helical segment. Residues 146 to 150 (SNPPD) are Extracellular-facing. A helical membrane pass occupies residues 151–172 (WTKNVEYTFTGIYTFESLIKIL). The Cytoplasmic portion of the chain corresponds to 173 to 185 (ARGFCVGEFTFLR). A helical transmembrane segment spans residues 186–204 (DPWNWLDFVVIVFAYLTEF). Residues 205–210 (VNLGNV) lie on the Extracellular side of the membrane. Residues 211 to 227 (SALRTFRVLRALKTISV) traverse the membrane as a helical segment. Residues 228–241 (IPGLKTIVGALIQS) are Cytoplasmic-facing. Residues 242–267 (VKKLSDVMILTVFCLSVFALIGLQLF) traverse the membrane as a helical segment. The Extracellular portion of the chain corresponds to 268–346 (MGNLKHKCFR…PDYGYTSFDT (79 aa)). The cysteines at positions 275 and 324 are disulfide-linked. Residues 347 to 363 (FGWAFLALFRLMTQDYW) constitute an intramembrane region (pore-forming). The Extracellular portion of the chain corresponds to 364–376 (ENLYQQTLRAAGK). The helical transmembrane segment at 377 to 402 (TYMIFFVVVIFLGSFYLINLILAVVA) threads the bilayer. Residues 402-449 (AMAYEEQNQANIEEAKQKELEFQQMLDRLKKEQEEAEAIAAAAAEYTS) are a coiled coil. At 403 to 744 (MAYEEQNQAN…FIYFIVMDPF (342 aa)) the chain is on the cytoplasmic side. Residues 458–471 (LSESSSETSRLSSK) are compositionally biased toward low complexity. Disordered regions lie at residues 458–540 (LSES…SIRG) and 574–609 (HSIF…RSPP). The span at 474-486 (KERRNRRKKKKQK) shows a compositional bias: basic residues. Basic and acidic residues-rich tracts occupy residues 489 to 509 (SGEE…ESIR) and 574 to 584 (HSIFGDNESRR). A coiled-coil region spans residues 684-708 (LRQRAMSRASILTNTVEELEESRQK). One copy of the II repeat lies at 725 to 988 (CSPYWIKFKK…EEDTDANNLQ (264 aa)). A helical membrane pass occupies residues 745 to 761 (VDLAITICIVLNTLFMA). Residues 762–770 (MEHHPMTDE) lie on the Extracellular side of the membrane. Residues 771–795 (FKNVLAVGNLVFTGIFAAEMVLKLI) traverse the membrane as a helical segment. At 796–804 (AMDPYEYFQ) the chain is on the cytoplasmic side. A helical transmembrane segment spans residues 805–821 (VGWNIFDSLIVTLSLVE). The Extracellular segment spans residues 822–830 (LFLADVEGL). The chain crosses the membrane as a helical span at residues 831–847 (SVLRSFRLLRVFKLAKS). Residues 848–864 (WPTLNMLIKIIGNSVGA) lie on the Cytoplasmic side of the membrane. Residues 865–887 (LGNLTLVLAIIVFIFAVVGMQLF) form a helical membrane-spanning segment. Topologically, residues 888 to 914 (GKSYKECVCKINENCKLPRWHMNDFFH) are extracellular. Cysteines 896 and 902 form a disulfide. The segment at residues 915-927 (SFLIVFRVLCGEW) is an intramembrane region (pore-forming). At 928–939 (IETMWDCMEVAG) the chain is on the extracellular side. The cysteines at positions 934 and 943 are disulfide-linked. The helical transmembrane segment at 940 to 966 (QTMCLIVYMMVMVIGNLVVLNLFLALL) threads the bilayer. The Cytoplasmic segment spans residues 967–1185 (LSSFSSDNLT…WWTIRKTCYR (219 aa)). Disordered regions lie at residues 1015–1039 (KKPK…YISN) and 1089–1145 (PIAP…EPIN). Basic and acidic residues predominate over residues 1019 to 1035 (GSKDTKRTADPNNKREN). Acidic residues predominate over residues 1135–1145 (GEEEAEAEPIN). Residues 1178-1486 (TIRKTCYRIV…KKYYNAMKKL (309 aa)) form an III repeat. Residues 1186–1210 (IVEHSWFESFIVLMILLSSGALAFE) form a helical membrane-spanning segment. Residues 1211-1222 (DIYIEKKKTIKI) lie on the Extracellular side of the membrane. Residues 1223-1248 (ILEYADKIFTYIFILEMLLKWVAYGY) traverse the membrane as a helical segment. Topologically, residues 1249–1250 (KT) are cytoplasmic. Residues 1251-1276 (YFTNAWCWLDFLIVDVSLVTLVANTL) form a helical membrane-spanning segment. The Extracellular segment spans residues 1277–1285 (GYSDLGPIK). Residues 1286–1302 (SLRTLRALRPLRALSRF) form a helical membrane-spanning segment. At 1303-1315 (EGMRVVVNALIGA) the chain is on the cytoplasmic side. A helical membrane pass occupies residues 1316–1340 (IPSIMNVLLVCLIFWLIFSIMGVNL). Residues 1341-1392 (FAGKFYECVNTTDGSRFSVSQVANRSECFALMNVSGNVRWKNLKVNFDNVGL) lie on the Extracellular side of the membrane. Cysteine 1348 and cysteine 1368 are disulfide-bonded. An intramembrane region (pore-forming) is located at residues 1393–1403 (GYLSLLQVATF). Topologically, residues 1404–1429 (KGWMDIMYAAVDSVNVNAQPIYEYNL) are extracellular. A helical membrane pass occupies residues 1430-1455 (YMYIYFVIFIIFGSFFTLNLFIGVII). The Cytoplasmic portion of the chain corresponds to 1456-1512 (DNFNQQKKKLGGQDIFMTEEQKKYYNAMKKLGSKKPQKPIPRPGNKFQGCIFDLVTN). A Phosphoserine; by PKC modification is found at serine 1488. One copy of the IV repeat lies at 1495–1793 (IPRPGNKFQG…WEKFDPDATQ (299 aa)). Residues 1513 to 1532 (QAFDITIMVLICLNMVTMMV) form a helical membrane-spanning segment. The Extracellular segment spans residues 1533–1543 (EKEGQTDYMSF). Residues 1544-1565 (VLYWINVVFIILFTGECVLKLI) form a helical membrane-spanning segment. At 1566–1574 (SLRHYYFTV) the chain is on the cytoplasmic side. A helical transmembrane segment spans residues 1575 to 1596 (GWNIFDFVVVILSIVGMFLAEM). The Extracellular portion of the chain corresponds to 1597 to 1605 (IEKYFVSPT). Residues 1606–1625 (LFRVIRLARIGRILRLIKGA) form a helical membrane-spanning segment. At 1626-1638 (KGIRTLLFALMMS) the chain is on the cytoplasmic side. Residues 1639 to 1661 (LPALFNIGLLLFLVMFIYAIFGM) form a helical membrane-spanning segment. Residues 1662 to 1684 (SNFAYVKKEAGINDMFNFETFGN) lie on the Extracellular side of the membrane. The segment at residues 1685-1697 (SMICLFQITTSAG) is an intramembrane region (pore-forming). The Extracellular portion of the chain corresponds to 1698–1731 (WDGLLAPILNSAPPDCDPKKVHPGSSVEGDCGNP). Cysteine 1713 and cysteine 1728 are oxidised to a cystine. The helical transmembrane segment at 1732 to 1757 (SVGIFYFVSYIIISFLVVVNMYIAVI) threads the bilayer. The Cytoplasmic portion of the chain corresponds to 1758–1984 (LENFSVATEE…EDKEKDESRK (227 aa)). The region spanning 1887-1916 (EDVSATIIQRAYRRYRLRQNVKNISSIYIK) is the IQ domain. The disordered stretch occupies residues 1933–1984 (DNVNENSSPEKTDATASTISPPSYDSVTKPDQEKYETDKTEKEDKEKDESRK). Polar residues predominate over residues 1946–1958 (ATASTISPPSYDS). Basic and acidic residues predominate over residues 1960 to 1984 (TKPDQEKYETDKTEKEDKEKDESRK).

The protein belongs to the sodium channel (TC 1.A.1.10) family. Nav1.7/SCN9A subfamily. The Nav1.7 voltage-gated sodium channel consists of an ion-conducting alpha subunit SCN9A which is functional on its own regulated by one or more beta-1 (SCN1B), beta-2 (SCN2B), beta-3 (SCN3B) and beta-4 (SCN4B) subunits. SCN1B and SCN3B are non-covalently associated with SCN9A. SCN2B and SCN4B are disulfide-linked to SCN9A. SCN1B regulates channel inactivation. Interacts with NEDD4 and NEDD4L; regulates Nav1.7 activity most probably through ubiquitination and subsequent endocytosis. Interacts with TMEM233; modulates the gating properties of NaV1.7. Ubiquitinated by NEDD4L; which may promote its endocytosis. In terms of processing, phosphorylation at Ser-1488 by PKC in a highly conserved cytoplasmic loop increases peak sodium currents. As to expression, expressed strongly in sciatic nerves, with moderate levels in kidney. Not detected in liver, brain and muscle.

The protein localises to the cell membrane. Its subcellular location is the cell projection. It localises to the neuron projection. It is found in the axon. The catalysed reaction is Na(+)(in) = Na(+)(out). Functionally, pore-forming subunit of Nav1.7, a voltage-gated sodium (Nav) channel that directly mediates the depolarizing phase of action potentials in excitable membranes. Navs, also called VGSCs (voltage-gated sodium channels) or VDSCs (voltage-dependent sodium channels), operate by switching between closed and open conformations depending on the voltage difference across the membrane. In the open conformation they allow Na(+) ions to selectively pass through the pore, along their electrochemical gradient. The influx of Na(+) ions provokes membrane depolarization, initiating the propagation of electrical signals throughout cells and tissues. Nav1.7 plays a crucial role in controlling the excitability and action potential propagation from nociceptor neurons, thereby contributing to the sensory perception of pain. The protein is Sodium channel protein type 9 subunit alpha of Mus musculus (Mouse).